The sequence spans 5588 residues: Histone-lysine N-methyltransferase 2D (5588 aa).

Residues 1-61 (MDSQKPPAED…QKPPHDCSRG (61 aa)) form a disordered region. The C2HC pre-PHD-type 1; degenerate zinc finger occupies 104–149 (GPCEAVLPKEDASQIGFPEGLTPAHLGEPGGHCWAHHWCAAWSAGV). PHD-type zinc fingers lie at residues 170–218 (QRCS…PEHS) and 270–323 (CPEC…CRLC). The PHD-type 2; degenerate zinc finger occupies 226 to 276 (EARCAVCEGPGQLCDLLFCTSCGHHYHGACLDTALTARKRASWQCPECKVC). The segment at 229–274 (CAVCEGPGQLCDLLFCTSCGHHYHGACLDTALTARKRASWQCPECK) adopts an RING-type 1; atypical zinc-finger fold. The RING-type 2; degenerate zinc finger occupies 276–321 (CQSCRKPGNDSKMLVCETCDKGYHTFCLKPPMEDLPAHSWKCKTCR). Disordered regions lie at residues 438 to 908 (MPLL…SPII) and 922 to 1315 (LEYP…DDDT). The tract at residues 439–642 (PLLPPPEESP…VSRLSPPPEE (204 aa)) is 15 X 5 AA repeats of S/P-P-P-E/P-E/A. Residues 440–463 (LLPPPEESPLSPPPEESPTSPPPE) are compositionally biased toward pro residues. 4 consecutive repeat copies span residues 442-446 (PPPEE), 460-464 (PPPEA), 469-473 (PPTEE), and 477-481 (SPPPE). The span at 464-475 (ASRLSPPTEESP) shows a compositional bias: low complexity. Composition is skewed to pro residues over residues 490–512 (GCPP…PLSP) and 519–560 (LSPP…PPPE). A run of 4 repeats spans residues 520 to 524 (SPPPE), 529 to 533 (SPPPE), 538 to 542 (SPPPE), and 547 to 551 (SPPPE). Residues 561–572 (ASRLFPPFEESP) show a composition bias toward low complexity. Residues 573-614 (LSPPPEDSPLSPPPEASRLSPPPEDSPMSPPPEDSPMSPPPE) show a composition bias toward pro residues. A run of 4 repeats spans residues 574 to 578 (SPPPE), 583 to 587 (SPPPE), 592 to 596 (SPPPE), and 610 to 614 (SPPPE). A compositionally biased stretch (low complexity) spans 619–636 (LPLPVLSHLSPLPEVSRL). The stretch at 637 to 641 (SPPPE) is repeat 15. The span at 637-677 (SPPPEESPLSPPPEDSPASPPPEASRLSPPPEDSPASPPPE) shows a compositional bias: pro residues. Over residues 696 to 712 (DSLVSLPMEESPLSPLP) the composition is skewed to low complexity. Residue S727 is modified to Phosphoserine. 3 stretches are compositionally biased toward low complexity: residues 735 to 755 (LCPQ…CLSP), 836 to 851 (PSQS…FSPS), and 876 to 893 (LPEE…LSPQ). 3 stretches are compositionally biased toward pro residues: residues 894 to 908 (LMPP…SPII), 959 to 973 (EPVP…PGSP), and 985 to 1012 (LPPP…PPAL). A compositionally biased stretch (low complexity) spans 1013–1023 (PLSVPSPLSPV). Basic and acidic residues predominate over residues 1033–1045 (AELHEMETDKGPE). 3 PHD-type zinc fingers span residues 1071-1124 (PSPA…PMEV), 1121-1171 (PMEV…SQGD), and 1198-1253 (LGVS…SPAR). S1107 is subject to Phosphoserine. Polar residues predominate over residues 1163 to 1172 (EISNLSQGDA). Residues 1201-1251 (STDVSPARDEGSLRLCTDSLPETDDSLLCDTGTATSGGKAEGDKGRRRSSP) form an RING-type 3; atypical zinc finger. Phosphoserine is present on S1205. T1223 bears the Phosphothreonine mark. S1226 is modified (phosphoserine). Over residues 1245–1258 (GRRRSSPARSRIKQ) the composition is skewed to basic residues. S1562 is modified (phosphoserine). 4 disordered regions span residues 1566–1721 (KRRQ…SKLE), 1751–1846 (GRPG…MESK), 1886–1962 (GLAL…SLQR), and 2095–2641 (SADG…QRQR). The segment covering 1593 to 1608 (PDDKKDGDLDTDDLLK) has biased composition (basic and acidic residues). S1627 is modified (phosphoserine). Over residues 1631-1641 (ELGKEETEESK) the composition is skewed to basic and acidic residues. Composition is skewed to basic residues over residues 1658–1668 (RQRKSHTRVKR) and 1709–1718 (KQQRRARKKS). The span at 1762–1782 (PRADGGSDRKELMTAMHKGDD) shows a compositional bias: basic and acidic residues. S1791 is modified (phosphoserine). T1822 bears the Phosphothreonine mark. Residues 1831 to 1846 (DLDRIPTEELPKMESK) show a composition bias toward basic and acidic residues. Low complexity-rich tracts occupy residues 1886 to 1896 (GLALGSLPSSS) and 1936 to 1947 (TTPSTPTTPTTE). Pro residues predominate over residues 2151–2166 (PTYPPYPSPTGAPAQP). Positions 2170 to 2181 (GTTTRPGTGQPG) are enriched in low complexity. S2196 is modified (phosphoserine). Position 2197 is a phosphothreonine (T2197). Position 2203 is an N6-acetyllysine (K2203). Phosphoserine occurs at positions 2217 and 2231. A compositionally biased stretch (basic and acidic residues) spans 2237-2249 (ESRKSLEVKKEEL). Phosphoserine occurs at positions 2266, 2268, and 2299. 2 stretches are compositionally biased toward pro residues: residues 2308–2322 (EPPP…PPSH) and 2331–2359 (YPDP…PPRS). Positions 2366 to 2388 (SRVPASPQSQSSSQSPLTPRPLS) are enriched in low complexity. The segment covering 2470-2486 (GQPTNFARSPGTGTFVG) has biased composition (polar residues). Asymmetric dimethylarginine is present on R2492. Residues 2504–2514 (LKPPVPQPGLP) show a composition bias toward pro residues. Over residues 2546 to 2557 (PSGSPLGPNSGP) the composition is skewed to low complexity. Position 2597 is a phosphoserine (S2597). The segment covering 2610–2622 (SSSSLATPELSSA) has biased composition (low complexity). A coiled-coil region spans residues 2627–2665 (ISSLSQTELEKQRQRQRLRELLIRQQIQRNTLRQEKETA). The LXXLL motif 1 signature appears at 2644–2648 (LRELL). Positions 2655–2806 (RNTLRQEKET…QLWQQQQQQQ (152 aa)) are disordered. Low complexity predominate over residues 2665–2680 (AAAAAGAVGPPGNWGA). Polar residues-rich tracts occupy residues 2691–2704 (SRGQ…QDRS) and 2739–2748 (PSSMDMNSRQ). Positions 2768-2813 (LQQQQQQQQQQQQQQQQQQQQQQQQQQQQQLWQQQQQQQQQQQQQA) form a coiled coil. The span at 2769–2806 (QQQQQQQQQQQQQQQQQQQQQQQQQQQQQLWQQQQQQQ) shows a compositional bias: low complexity. R2829 is subject to Asymmetric dimethylarginine. The LXXLL motif 2 signature appears at 3030–3034 (LDDLL). The segment at 3069 to 3104 (NEKAEREALLRGVEPVSLGPEERPPPAPDNSEPRLT) is disordered. The residue at position 3071 (K3071) is an N6-acetyllysine. S3122 and S3193 each carry phosphoserine. Disordered regions lie at residues 3129–3193 (NTPK…LNPS) and 3271–3326 (QQQQ…QSMV). A compositionally biased stretch (low complexity) spans 3271–3284 (QQQQQQQQQQQQQQ). N6-acetyllysine is present on K3430. Disordered regions lie at residues 3460–3496 (SGGS…TFAQ), 3593–3617 (RNKQ…VLAV), 3633–3661 (LLPA…GGMV), and 3678–3704 (QQQQ…NLAL). Residues 3559 to 3613 (EKLKLVTEQQSKIQKQLDQVRKQQKEHTNLMAEYRNKQQQQQQQQQQQQQQQHSA) are a coiled coil. Positions 3596–3610 (QQQQQQQQQQQQQQQ) are enriched in low complexity. Residues 3712-3747 (RLLQERQLQLQQQRMQLAQKLQQQQQQQQQQQQQQH) are a coiled coil. The residue at position 3725 (R3725) is an Asymmetric dimethylarginine. 2 disordered regions span residues 3760-3780 (PGVQ…PSNH) and 3808-3827 (LQQQ…QGPH). Coiled-coil stretches lie at residues 3854–3883 (RLLT…QQQQ) and 3912–4052 (SLQQ…QVTL). Residues 4053 to 4249 (GPGLPVKPLQ…QGPPGAGVMP (197 aa)) form a disordered region. Composition is skewed to low complexity over residues 4128-4159 (SQLL…PQPQ), 4172-4183 (GQQLGSGSSSES), and 4226-4240 (GSQP…QSGQ). At R4255 the chain carries Asymmetric dimethylarginine. S4272 carries the phosphoserine modification. An LXXLL motif 3 motif is present at residues 4279 to 4283 (LQALL). Residues 4290–4452 (QSQAVRQTPP…SSLVPGHLDQ (163 aa)) form a disordered region. Over residues 4294-4305 (VRQTPPFQEPGT) the composition is skewed to polar residues. A compositionally biased stretch (low complexity) spans 4307 to 4322 (PSPLQGLLGCQPQPGG). Positions 4310 to 4314 (LQGLL) match the LXXLL motif 4 motif. Over residues 4379–4391 (QLPSPSAQLTPTH) the composition is skewed to polar residues. S4410 carries the post-translational modification Phosphoserine. Residues 4432-4445 (DNLTEAQKPEQSSL) show a composition bias toward polar residues. The short motif at 4514–4518 (LQKLL) is the LXXLL motif 5 element. An N6-acetyllysine modification is found at K4516. Disordered regions lie at residues 4553-4596 (LQGT…EDGV), 4664-4716 (KNNL…EGAL), and 4729-4778 (AALP…QLGS). A compositionally biased stretch (pro residues) spans 4670-4684 (PPTPPSSLPPTPPPS). A Phosphoserine modification is found at S4789. K4807 is covalently cross-linked (Glycyl lysine isopeptide (Lys-Gly) (interchain with G-Cter in SUMO2)). K4827 bears the N6-acetyllysine mark. Residues 4829–4874 (KGSEVSVMLTVSAAAAKNLNGVMVAVAELLSMKIPNSYEVLFPDGP) form an RING-type 4; degenerate zinc finger. The segment at 4877–4908 (AGLEPKKGEAEGPGGKEKGLSGKGPDTGPDWL) is disordered. Over residues 4879–4896 (LEPKKGEAEGPGGKEKGL) the composition is skewed to basic and acidic residues. Residue K4931 forms a Glycyl lysine isopeptide (Lys-Gly) (interchain with G-Cter in SUMO2) linkage. Positions 4956–5031 (QLSAPPPEEP…SEDSRPPRLK (76 aa)) are disordered. The segment covering 4959–4982 (APPPEEPSPPPSPLAPSPASPPAE) has biased composition (pro residues). A compositionally biased stretch (basic and acidic residues) spans 5017 to 5027 (RPPEESEDSRP). Residues 5041–5045 (LRLLL) carry the LXXLL motif 6 motif. Residues 5080–5120 (NRRCCFCHEEGDGATDGPARLLNLDLDLWVHLNCALWSTEV) form a C2HC pre-PHD-type 2 zinc finger. A PHD-type 7 zinc finger spans residues 5141 to 5188 (TKCSLCQRTGATSSCNRMRCPNVYHFACAIRAKCMFFKDKTMLCPVHK). In terms of domain architecture, FYR N-terminal spans 5226–5286 (LHMFRVGGLV…CCYRCSISEN (61 aa)). An FYR C-terminal domain is found at 5287-5372 (NGRPEFVIKV…ESCQNYLFRY (86 aa)). The WDR5 interaction motif (WIN) signature appears at 5388–5393 (GCARSE). In terms of domain architecture, SET spans 5448-5564 (NNVYLARSRI…KGEELTYDYQ (117 aa)). S-adenosyl-L-methionine contacts are provided by residues Y5502 and 5525–5526 (NH). Zn(2+)-binding residues include C5528, C5576, C5578, and C5583. Residues 5572 to 5588 (HKIPCHCGAWNCRKWMN) form the Post-SET domain.

The protein belongs to the class V-like SAM-binding methyltransferase superfamily. Histone-lysine methyltransferase family. TRX/MLL subfamily. Component of the MLL2 complex (also named ASCOM complex), at least composed of catalytic subunit KMT2D/MLL2, ASH2L, RBBP5, WDR5, NCOA6, DPY30, KDM6A, PAXIP1/PTIP, PAGR1 and alpha- and beta-tubulin. Forms a core complex with the evolutionary conserved subcomplex WRAD composed of WDR5, RBBP5, ASH2L/ASH2 and DPY30 subunits; WRAD differentially stimulates the methyltransferase activity. Interacts with ESR1; interaction is direct. Interacts (via WIN motif) with WDR5.

It is found in the nucleus. The enzyme catalyses L-lysyl(4)-[histone H3] + S-adenosyl-L-methionine = N(6)-methyl-L-lysyl(4)-[histone H3] + S-adenosyl-L-homocysteine + H(+). Histone methyltransferase that catalyzes methyl group transfer from S-adenosyl-L-methionine to the epsilon-amino group of 'Lys-4' of histone H3 (H3K4). Part of chromatin remodeling machinery predominantly forms H3K4me1 methylation marks at active chromatin sites where transcription and DNA repair take place. Acts as a coactivator for estrogen receptor by being recruited by ESR1, thereby activating transcription. The protein is Histone-lysine N-methyltransferase 2D (Kmt2d) of Mus musculus (Mouse).